The following is a 186-amino-acid chain: Protein C (186 aa).

Residues 1–15 (MSKTDWNASGLSRPS) show a composition bias toward polar residues. Residues 1 to 44 (MSKTDWNASGLSRPSPSAHWPSRKLWQHGQKYQTTQDRSEPPAG) are disordered.

Belongs to the morbillivirus protein C family. Interacts with the phosphoprotein (via C-terminus); this interaction allows C to associate with the ribonucleocapsid.

The protein resides in the host nucleus. It is found in the host cytoplasmic vesicle. Ribonucleocapsid-associated protein that interacts with the phosphoprotein (P), thereby increasing replication accuracy and processivity of the polymerase complex. This chain is Protein C (P/V/C), found in Homo sapiens (Human).